We begin with the raw amino-acid sequence, 205 residues long: Large ribosomal subunit protein uL4 (205 aa).

Positions 44–77 are disordered; that stretch reads KRQGTSKVKNRSAVRGGGKKPWRQKGTGRARQGS. Basic residues predominate over residues 51–71; it reads VKNRSAVRGGGKKPWRQKGTG.

It belongs to the universal ribosomal protein uL4 family. As to quaternary structure, part of the 50S ribosomal subunit.

Functionally, one of the primary rRNA binding proteins, this protein initially binds near the 5'-end of the 23S rRNA. It is important during the early stages of 50S assembly. It makes multiple contacts with different domains of the 23S rRNA in the assembled 50S subunit and ribosome. Its function is as follows. Forms part of the polypeptide exit tunnel. This is Large ribosomal subunit protein uL4 from Lactobacillus delbrueckii subsp. bulgaricus (strain ATCC 11842 / DSM 20081 / BCRC 10696 / JCM 1002 / NBRC 13953 / NCIMB 11778 / NCTC 12712 / WDCM 00102 / Lb 14).